A 290-amino-acid chain; its full sequence is ATP synthase gamma chain (290 aa).

Belongs to the ATPase gamma chain family. As to quaternary structure, F-type ATPases have 2 components, CF(1) - the catalytic core - and CF(0) - the membrane proton channel. CF(1) has five subunits: alpha(3), beta(3), gamma(1), delta(1), epsilon(1). CF(0) has three main subunits: a, b and c.

It localises to the cell membrane. Produces ATP from ADP in the presence of a proton gradient across the membrane. The gamma chain is believed to be important in regulating ATPase activity and the flow of protons through the CF(0) complex. The sequence is that of ATP synthase gamma chain from Buchnera aphidicola subsp. Acyrthosiphon pisum (strain 5A).